We begin with the raw amino-acid sequence, 269 residues long: 4-hydroxy-4-methyl-2-oxoglutarate aldolase cghB (269 aa).

The active-site Proton acceptor is the H48. E155 and D181 together coordinate a divalent metal cation. Substrate is bound at residue D181.

Belongs to the HpcH/HpaI aldolase family. As to quaternary structure, homohexamer; trimer of dimers. Co(2+) serves as cofactor. The cofactor is Mn(2+). It depends on Zn(2+) as a cofactor. Requires Fe(2+) as cofactor. Mg(2+) is required as a cofactor.

It carries out the reaction 4-hydroxy-4-methyl-2-oxoglutarate = 2 pyruvate. The protein operates within secondary metabolite biosynthesis. Its function is as follows. 4-hydroxy-4-methyl-2-oxoglutarate aldolase; part of the gene cluster that mediates the biosynthesis of the tetramic acid Sch210972, a potential anti-HIV fungal natural product that contains a decalin core. The PKS module of cghG together with the enoylreductase cghC catalyze the formation of the polyketide unit which is then conjugated to 4-hydroxyl-4-methyl glutamate (HMG) by the condensation domain of the cghG NRPS module. One unique structural feature of Sch210972 is the tetramic acid motif proposed to be derived from the non-proteinogenic amino acid HMG, by a Dieckmann-type condensation catalyzed by the reductase domain of cghG. The aldolase cghB catalyzes the aldol condensation of 2 molecules of pyruvic acid to yield the intermediate 4-hydroxyl-4-methyl-2-oxoglutarate (HMOG), which can then be stereoselectively transaminated by an unidentified enzyme to form HMG. The Diels-Alderase cghA then uses the Dieckmann product released by cghG as substrate and catalyzes the Diels-Alder cycloaddition to form the decalin ring of Sch210972. CghA also suppresses the nonenzymatic formation of the alternative stereoisomer. This Chaetomium globosum (strain ATCC 6205 / CBS 148.51 / DSM 1962 / NBRC 6347 / NRRL 1970) (Soil fungus) protein is 4-hydroxy-4-methyl-2-oxoglutarate aldolase cghB.